We begin with the raw amino-acid sequence, 195 residues long: Protein LIGHT-DEPENDENT SHORT HYPOCOTYLS 4 (195 aa).

A compositionally biased stretch (low complexity) spans 28-38 (TTTSSSSSSSS). Disordered regions lie at residues 28–51 (TTTSSSSSSSSGGSGTNQLSRYEN) and 162–195 (SQAKARGISYEKKKRKRPPPPLPPAQPAISSSPN). The region spanning 48–175 (RYENQKRRDW…ARGISYEKKK (128 aa)) is the ALOG domain. Residues 173–177 (KKKRK) carry the Nuclear localization signal motif.

Belongs to the plant homeotic and developmental regulators ALOG protein family. In terms of tissue distribution, induced by NAC054/CUC1 and NAC098/CUC2 in shoot organ boundary cells.

The protein localises to the nucleus. In terms of biological role, probable transcription regulator that acts as a developmental regulator by promoting cell growth in response to light. May suppress organ differentiation in the boundary region. This Arabidopsis thaliana (Mouse-ear cress) protein is Protein LIGHT-DEPENDENT SHORT HYPOCOTYLS 4 (LSH4).